Consider the following 1088-residue polypeptide: RNA-directed RNA polymerase (1088 aa).

The 187-residue stretch at 501 to 687 (LSYGDVTRFL…AKRYIAGGKI (187 aa)) folds into the RdRp catalytic domain.

This sequence belongs to the reoviridae RNA-directed RNA polymerase family. Interacts with VP3 (Potential). Interacts with VP2; this interaction activates VP1. Interacts with NSP5; this interaction is probably necessary for the formation of functional virus factories. Interacts with NSP2; this interaction is weak. Mg(2+) is required as a cofactor.

It is found in the virion. The catalysed reaction is RNA(n) + a ribonucleoside 5'-triphosphate = RNA(n+1) + diphosphate. Functionally, RNA-directed RNA polymerase that is involved in both transcription and genome replication. Together with VP3 capping enzyme, forms an enzyme complex positioned near the channels situated at each of the five-fold vertices of the core. Following infection, the outermost layer of the virus is lost, leaving a double-layered particle (DLP) made up of the core and VP6 shell. VP1 then catalyzes the transcription of fully conservative plus-strand genomic RNAs that are extruded through the DLP's channels into the cytoplasm where they function as mRNAs for translation of viral proteins. One copy of each of the viral (+)RNAs is also recruited during core assembly, together with newly synthesized polymerase complexes and VP2. The polymerase of these novo-formed particles catalyzes the synthesis of complementary minus-strands leading to dsRNA formation. To do so, the polymerase specifically recognizes and binds 4 bases 5'-UGUG-3' in the conserved 3'-sequence of plus-strand RNA templates. VP2 presumably activates the autoinhibited VP1-RNA complex to coordinate packaging and genome replication. Once dsRNA synthesis is complete, the polymerase switches to the transcriptional mode, thus providing secondary transcription. This Bos taurus (Bovine) protein is RNA-directed RNA polymerase.